Here is a 302-residue protein sequence, read N- to C-terminus: Sulfate adenylyltransferase subunit 2 (302 aa).

Belongs to the PAPS reductase family. CysD subfamily. In terms of assembly, heterodimer composed of CysD, the smaller subunit, and CysN.

It catalyses the reaction sulfate + ATP + H(+) = adenosine 5'-phosphosulfate + diphosphate. The protein operates within sulfur metabolism; hydrogen sulfide biosynthesis; sulfite from sulfate: step 1/3. Functionally, with CysN forms the ATP sulfurylase (ATPS) that catalyzes the adenylation of sulfate producing adenosine 5'-phosphosulfate (APS) and diphosphate, the first enzymatic step in sulfur assimilation pathway. APS synthesis involves the formation of a high-energy phosphoric-sulfuric acid anhydride bond driven by GTP hydrolysis by CysN coupled to ATP hydrolysis by CysD. The polypeptide is Sulfate adenylyltransferase subunit 2 (Escherichia coli O7:K1 (strain IAI39 / ExPEC)).